The primary structure comprises 214 residues: UPF0301 protein blr1492 (214 aa).

Residues 1–22 are disordered; it reads MAPTGKRTGESTRSTGPAPPSS.

This sequence belongs to the UPF0301 (AlgH) family.

The sequence is that of UPF0301 protein blr1492 from Bradyrhizobium diazoefficiens (strain JCM 10833 / BCRC 13528 / IAM 13628 / NBRC 14792 / USDA 110).